The primary structure comprises 37 residues: Large ribosomal subunit protein bL36 (37 aa).

It belongs to the bacterial ribosomal protein bL36 family.

This is Large ribosomal subunit protein bL36 from Natranaerobius thermophilus (strain ATCC BAA-1301 / DSM 18059 / JW/NM-WN-LF).